A 394-amino-acid chain; its full sequence is 1-deoxy-D-xylulose 5-phosphate reductoisomerase (394 aa).

Residues Thr-11, Gly-12, Ser-13, Ile-14, Gly-37, Asn-39, and Asn-126 each coordinate NADPH. Lys-127 lines the 1-deoxy-D-xylulose 5-phosphate pocket. Residue Glu-128 coordinates NADPH. Asp-152 is a Mn(2+) binding site. Ser-153, Glu-154, Ser-178, and His-201 together coordinate 1-deoxy-D-xylulose 5-phosphate. Glu-154 lines the Mn(2+) pocket. Position 207 (Gly-207) interacts with NADPH. Residues Ser-214, Asn-219, Lys-220, and Glu-223 each coordinate 1-deoxy-D-xylulose 5-phosphate. Glu-223 is a binding site for Mn(2+).

The protein belongs to the DXR family. Requires Mg(2+) as cofactor. It depends on Mn(2+) as a cofactor.

The enzyme catalyses 2-C-methyl-D-erythritol 4-phosphate + NADP(+) = 1-deoxy-D-xylulose 5-phosphate + NADPH + H(+). It functions in the pathway isoprenoid biosynthesis; isopentenyl diphosphate biosynthesis via DXP pathway; isopentenyl diphosphate from 1-deoxy-D-xylulose 5-phosphate: step 1/6. Functionally, catalyzes the NADPH-dependent rearrangement and reduction of 1-deoxy-D-xylulose-5-phosphate (DXP) to 2-C-methyl-D-erythritol 4-phosphate (MEP). The polypeptide is 1-deoxy-D-xylulose 5-phosphate reductoisomerase (Synechocystis sp. (strain ATCC 27184 / PCC 6803 / Kazusa)).